Here is a 152-residue protein sequence, read N- to C-terminus: NADH-quinone oxidoreductase subunit I 1 (152 aa).

2 4Fe-4S ferredoxin-type domains span residues 53–83 and 94–123; these read MKLG…MKSD and VTYV…LGTG. Residues C63, C66, C69, C73, C103, C106, C109, and C113 each contribute to the [4Fe-4S] cluster site.

Belongs to the complex I 23 kDa subunit family. NDH-1 is composed of 14 different subunits. Subunits NuoA, H, J, K, L, M, N constitute the membrane sector of the complex. [4Fe-4S] cluster serves as cofactor.

The protein resides in the cell inner membrane. It catalyses the reaction a quinone + NADH + 5 H(+)(in) = a quinol + NAD(+) + 4 H(+)(out). NDH-1 shuttles electrons from NADH, via FMN and iron-sulfur (Fe-S) centers, to quinones in the respiratory chain. The immediate electron acceptor for the enzyme in this species is believed to be ubiquinone. Couples the redox reaction to proton translocation (for every two electrons transferred, four hydrogen ions are translocated across the cytoplasmic membrane), and thus conserves the redox energy in a proton gradient. The chain is NADH-quinone oxidoreductase subunit I 1 from Koribacter versatilis (strain Ellin345).